Reading from the N-terminus, the 161-residue chain is Zinc finger A20 and AN1 domain-containing stress-associated protein 9 (161 aa).

The A20-type zinc-finger motif lies at 17 to 51 (PEAPILCVNNCGFFGSSMTNNMCSKCYRDFVKVTT). 4 residues coordinate Zn(2+): Cys-23, Cys-27, Cys-39, and Cys-42. The tract at residues 62 to 99 (FTPASSSKTPLEPAKPDEVPAAAVEDKQAAQEPPKPPS) is disordered. Over residues 75–90 (AKPDEVPAAAVEDKQA) the composition is skewed to basic and acidic residues. Residues 96–142 (KPPSNRCLSCRKKVGLTGFQCRCGGTFCSTHRYTEAHDCTFDYKKAG) form an AN1-type zinc finger. Cys-102, Cys-105, Cys-116, Cys-118, Cys-123, His-126, His-132, and Cys-134 together coordinate Zn(2+).

May be involved in environmental stress response. This is Zinc finger A20 and AN1 domain-containing stress-associated protein 9 (SAP9) from Oryza sativa subsp. japonica (Rice).